A 486-amino-acid chain; its full sequence is UDP-N-acetylmuramate--L-alanine ligase (486 aa).

An ATP-binding site is contributed by 129–135 (GTHGKTT).

Belongs to the MurCDEF family.

The protein localises to the cytoplasm. It catalyses the reaction UDP-N-acetyl-alpha-D-muramate + L-alanine + ATP = UDP-N-acetyl-alpha-D-muramoyl-L-alanine + ADP + phosphate + H(+). The protein operates within cell wall biogenesis; peptidoglycan biosynthesis. Cell wall formation. The protein is UDP-N-acetylmuramate--L-alanine ligase of Vibrio vulnificus (strain CMCP6).